Consider the following 439-residue polypeptide: tRNA modification GTPase MnmE (439 aa).

Arg20, Glu78, and Lys116 together coordinate (6S)-5-formyl-5,6,7,8-tetrahydrofolate. The 154-residue stretch at 211–364 (GIYVTILGEP…LLNLIKQKVE (154 aa)) folds into the TrmE-type G domain. GTP-binding positions include 221-226 (NSGKST), 240-246 (SEYAGTT), and 265-268 (DTAG). Ser225 and Thr246 together coordinate Mg(2+). Lys439 is a binding site for (6S)-5-formyl-5,6,7,8-tetrahydrofolate.

It belongs to the TRAFAC class TrmE-Era-EngA-EngB-Septin-like GTPase superfamily. TrmE GTPase family. In terms of assembly, homodimer. Heterotetramer of two MnmE and two MnmG subunits. It depends on K(+) as a cofactor.

The protein resides in the cytoplasm. Its function is as follows. Exhibits a very high intrinsic GTPase hydrolysis rate. Involved in the addition of a carboxymethylaminomethyl (cmnm) group at the wobble position (U34) of certain tRNAs, forming tRNA-cmnm(5)s(2)U34. This is tRNA modification GTPase MnmE from Ehrlichia chaffeensis (strain ATCC CRL-10679 / Arkansas).